We begin with the raw amino-acid sequence, 440 residues long: Diaminopimelate decarboxylase (440 aa).

Lys-61 is modified (N6-(pyridoxal phosphate)lysine). Pyridoxal 5'-phosphate contacts are provided by residues Gly-234 and 275–278; that span reads EPGR. Substrate-binding residues include Arg-278, Arg-314, and Tyr-318. The active-site Proton donor is the Cys-348. Positions 349 and 384 each coordinate substrate. Tyr-384 contacts pyridoxal 5'-phosphate. A compositionally biased stretch (low complexity) spans 421 to 431; it reads LAPELEPGPAL. Residues 421-440 form a disordered region; that stretch reads LAPELEPGPALSPRPSRDPR.

The protein belongs to the Orn/Lys/Arg decarboxylase class-II family. LysA subfamily. Homodimer. Pyridoxal 5'-phosphate is required as a cofactor.

The enzyme catalyses meso-2,6-diaminopimelate + H(+) = L-lysine + CO2. The protein operates within amino-acid biosynthesis; L-lysine biosynthesis via DAP pathway; L-lysine from DL-2,6-diaminopimelate: step 1/1. In terms of biological role, specifically catalyzes the decarboxylation of meso-diaminopimelate (meso-DAP) to L-lysine. The protein is Diaminopimelate decarboxylase of Streptomyces coelicolor (strain ATCC BAA-471 / A3(2) / M145).